Here is a 1342-residue protein sequence, read N- to C-terminus: DNA-directed RNA polymerase subunit beta (1342 aa).

Belongs to the RNA polymerase beta chain family. In terms of assembly, the RNAP catalytic core consists of 2 alpha, 1 beta, 1 beta' and 1 omega subunit. When a sigma factor is associated with the core the holoenzyme is formed, which can initiate transcription.

The enzyme catalyses RNA(n) + a ribonucleoside 5'-triphosphate = RNA(n+1) + diphosphate. In terms of biological role, DNA-dependent RNA polymerase catalyzes the transcription of DNA into RNA using the four ribonucleoside triphosphates as substrates. This chain is DNA-directed RNA polymerase subunit beta, found in Pectobacterium carotovorum subsp. carotovorum (strain PC1).